We begin with the raw amino-acid sequence, 248 residues long: MAGHSQFKNIMHRKGRQDAVRSKMFSKLAREITVAAKAGLPDPTMNARLRLAIQNAKAQSMPKDNIDRAIKKAAGADGENYDEVRYEGYGPGGTAIIVEALTDNRNRTASNVRSIFTKAGGALGETGSVSFSFDHVGEITYKLAAGDADKVMEAAIEAGADDVETDEEGHYITCAFEALGEVSKALEASLGEAETVKAVWRAQNNVPVDEEKAQSLMKLIDSLEDDDDVQNVYSNFEVSEEVLAKLSA.

The protein belongs to the TACO1 family.

It is found in the cytoplasm. The polypeptide is Probable transcriptional regulatory protein RHE_CH03475 (Rhizobium etli (strain ATCC 51251 / DSM 11541 / JCM 21823 / NBRC 15573 / CFN 42)).